Consider the following 626-residue polypeptide: tRNA uridine 5-carboxymethylaminomethyl modification enzyme MnmG (626 aa).

13–18 (GGGHAG) contributes to the FAD binding site. 273 to 287 (GPRYCPSIEDKIHRF) provides a ligand contact to NAD(+).

It belongs to the MnmG family. As to quaternary structure, homodimer. Heterotetramer of two MnmE and two MnmG subunits. FAD serves as cofactor.

The protein resides in the cytoplasm. NAD-binding protein involved in the addition of a carboxymethylaminomethyl (cmnm) group at the wobble position (U34) of certain tRNAs, forming tRNA-cmnm(5)s(2)U34. This chain is tRNA uridine 5-carboxymethylaminomethyl modification enzyme MnmG, found in Acinetobacter baumannii (strain AYE).